A 257-amino-acid chain; its full sequence is Achaete-scute complex protein T3 (257 aa).

Residues 83-145 form the bHLH domain; it reads PSVARRNARE…RIAVEYIRGL (63 aa). Residues 161-221 are disordered; it reads YNSADESSND…SEISGGGYIK (61 aa). Composition is skewed to low complexity over residues 165 to 184 and 193 to 213; these read DESS…LDSS and QSAQ…SGSE.

As to quaternary structure, efficient DNA binding requires dimerization with another bHLH protein. In terms of tissue distribution, l(1)SC, SC and AC strongly label the presumptive stomatogastric nervous system, while ASE is more prominent in the presumptive procephalic lobe.

Its function is as follows. AS-C proteins are involved in the determination of the neuronal precursors in the peripheral nervous system and the central nervous system. In Drosophila melanogaster (Fruit fly), this protein is Achaete-scute complex protein T3 (l(1)sc).